The sequence spans 386 residues: Agamous-like MADS-box protein AGL103 (386 aa).

The 48-residue stretch at 29–76 (SSSRATSLIKRQQTVFKKAKELSILCDIDVCVICYGSNGELKTWPEER) folds into the MADS-box domain.

As to quaternary structure, interacts with MEE14/CBP1.

It localises to the nucleus. Probable transcription factor that may function in the maintenance of the proper function of the central cell in pollen tube attraction. The sequence is that of Agamous-like MADS-box protein AGL103 from Arabidopsis thaliana (Mouse-ear cress).